We begin with the raw amino-acid sequence, 101 residues long: Replication restart protein PriB (101 aa).

In terms of domain architecture, SSB spans M1 to T101.

It belongs to the PriB family. Homodimer. Interacts with PriA and DnaT. Component of the replication restart primosome. Primosome assembly occurs via a 'hand-off' mechanism. PriA binds to replication forks, subsequently PriB then DnaT bind; DnaT then displaces ssDNA to generate the helicase loading substrate.

Its function is as follows. Involved in the restart of stalled replication forks, which reloads the replicative helicase on sites other than the origin of replication; the PriA-PriB pathway is the major replication restart pathway. During primosome assembly it facilitates complex formation between PriA and DnaT on DNA; stabilizes PriA on DNA. Stimulates the DNA unwinding activity of PriA helicase. This chain is Replication restart protein PriB, found in Shewanella oneidensis (strain ATCC 700550 / JCM 31522 / CIP 106686 / LMG 19005 / NCIMB 14063 / MR-1).